The primary structure comprises 296 residues: N-acetylmuramic acid 6-phosphate etherase 2 (296 aa).

An SIS domain is found at Ile-55–Lys-218. Glu-83 (proton donor) is an active-site residue. Glu-114 is an active-site residue.

This sequence belongs to the GCKR-like family. MurNAc-6-P etherase subfamily. In terms of assembly, homodimer.

The enzyme catalyses N-acetyl-D-muramate 6-phosphate + H2O = N-acetyl-D-glucosamine 6-phosphate + (R)-lactate. It functions in the pathway amino-sugar metabolism; N-acetylmuramate degradation. Specifically catalyzes the cleavage of the D-lactyl ether substituent of MurNAc 6-phosphate, producing GlcNAc 6-phosphate and D-lactate. This is N-acetylmuramic acid 6-phosphate etherase 2 from Lactiplantibacillus plantarum (strain ATCC BAA-793 / NCIMB 8826 / WCFS1) (Lactobacillus plantarum).